Reading from the N-terminus, the 481-residue chain is UDP-glycosyltransferase 72B3 (481 aa).

Residues serine 277, 347 to 349 (APQ), 364 to 372 (HCGWNSSLE), and 386 to 389 (YAEQ) each bind UDP-alpha-D-glucose.

Belongs to the UDP-glycosyltransferase family.

Its function is as follows. Possesses low quercetin 3-O-glucosyltransferase activity in vitro. This Arabidopsis thaliana (Mouse-ear cress) protein is UDP-glycosyltransferase 72B3 (UGT72B3).